Here is a 227-residue protein sequence, read N- to C-terminus: Uracil-DNA glycosylase (227 aa).

Asp68 acts as the Proton acceptor in catalysis.

This sequence belongs to the uracil-DNA glycosylase (UDG) superfamily. UNG family.

It localises to the cytoplasm. It catalyses the reaction Hydrolyzes single-stranded DNA or mismatched double-stranded DNA and polynucleotides, releasing free uracil.. In terms of biological role, excises uracil residues from the DNA which can arise as a result of misincorporation of dUMP residues by DNA polymerase or due to deamination of cytosine. The protein is Uracil-DNA glycosylase of Mycobacterium leprae (strain Br4923).